The primary structure comprises 319 residues: MLDKHGRKINYLRVSVTDRCNLRCVYCMPPEGIVKKEHDNIMRYEEIFKVVKSASLLGVNKIRFTGGEPLILKDIDKLIYNTSKINSIKDIAMTTNAILLEDMVEELKKAGLKRVNISLDSLKEDRFKSITRGGDINKVFKSIEKSLSIGMKPIKINTVIMKGINDDEIDDFMNLTKKYPISVRFIELMPIGEGRKLYKDGYISSEEIISKHSDLIPVETEKSSTALLYKFKESKENIGFISPMSCKFCSGCNRVRLTSEGTLKPCLHSEKEVNLKNYVGNNQALLSKINETIYNKPLEHHMIEEKESKSKKMMYQIGG.

One can recognise a Radical SAM core domain in the interval 4-227 (KHGRKINYLR…VETEKSSTAL (224 aa)). GTP is bound at residue Arg13. [4Fe-4S] cluster is bound by residues Cys20 and Cys24. Tyr26 provides a ligand contact to S-adenosyl-L-methionine. Position 27 (Cys27) interacts with [4Fe-4S] cluster. Arg63 is a GTP binding site. Gly67 contacts S-adenosyl-L-methionine. Thr94 contributes to the GTP binding site. Ser118 lines the S-adenosyl-L-methionine pocket. Lys155 provides a ligand contact to GTP. Residue Met189 participates in S-adenosyl-L-methionine binding. Cys249 and Cys252 together coordinate [4Fe-4S] cluster. 254 to 256 (RVR) is a binding site for GTP. A [4Fe-4S] cluster-binding site is contributed by Cys266.

This sequence belongs to the radical SAM superfamily. MoaA family. As to quaternary structure, monomer and homodimer. [4Fe-4S] cluster serves as cofactor.

The catalysed reaction is GTP + AH2 + S-adenosyl-L-methionine = (8S)-3',8-cyclo-7,8-dihydroguanosine 5'-triphosphate + 5'-deoxyadenosine + L-methionine + A + H(+). It participates in cofactor biosynthesis; molybdopterin biosynthesis. In terms of biological role, catalyzes the cyclization of GTP to (8S)-3',8-cyclo-7,8-dihydroguanosine 5'-triphosphate. This is GTP 3',8-cyclase from Clostridium botulinum (strain ATCC 19397 / Type A).